The following is a 375-amino-acid chain: Tryptophan--tRNA ligase (375 aa).

Positions 81–89 (PSGPVHIGH) match the 'HIGH' region motif. The short motif at 258–262 (KMSAS) is the 'KMSKS' region element.

Belongs to the class-I aminoacyl-tRNA synthetase family.

Its subcellular location is the cytoplasm. The enzyme catalyses tRNA(Trp) + L-tryptophan + ATP = L-tryptophyl-tRNA(Trp) + AMP + diphosphate + H(+). In Pyrobaculum aerophilum (strain ATCC 51768 / DSM 7523 / JCM 9630 / CIP 104966 / NBRC 100827 / IM2), this protein is Tryptophan--tRNA ligase.